A 571-amino-acid polypeptide reads, in one-letter code: Proline--tRNA ligase (571 aa).

Belongs to the class-II aminoacyl-tRNA synthetase family. ProS type 1 subfamily. Homodimer.

The protein localises to the cytoplasm. It catalyses the reaction tRNA(Pro) + L-proline + ATP = L-prolyl-tRNA(Pro) + AMP + diphosphate. Functionally, catalyzes the attachment of proline to tRNA(Pro) in a two-step reaction: proline is first activated by ATP to form Pro-AMP and then transferred to the acceptor end of tRNA(Pro). As ProRS can inadvertently accommodate and process non-cognate amino acids such as alanine and cysteine, to avoid such errors it has two additional distinct editing activities against alanine. One activity is designated as 'pretransfer' editing and involves the tRNA(Pro)-independent hydrolysis of activated Ala-AMP. The other activity is designated 'posttransfer' editing and involves deacylation of mischarged Ala-tRNA(Pro). The misacylated Cys-tRNA(Pro) is not edited by ProRS. This is Proline--tRNA ligase from Vibrio campbellii (strain ATCC BAA-1116).